A 430-amino-acid chain; its full sequence is Phosphoribosylamine--glycine ligase (430 aa).

In terms of domain architecture, ATP-grasp spans 109–316; it reads KDFMARHGIP…LLDLIEAALN (208 aa). 135–196 lines the ATP pocket; that stretch reads VRQQGAPIVI…EEYLDGEEAS (62 aa). Mg(2+)-binding residues include glutamate 286 and asparagine 288.

The protein belongs to the GARS family. The cofactor is Mg(2+). Mn(2+) serves as cofactor.

The catalysed reaction is 5-phospho-beta-D-ribosylamine + glycine + ATP = N(1)-(5-phospho-beta-D-ribosyl)glycinamide + ADP + phosphate + H(+). It participates in purine metabolism; IMP biosynthesis via de novo pathway; N(1)-(5-phospho-D-ribosyl)glycinamide from 5-phospho-alpha-D-ribose 1-diphosphate: step 2/2. The sequence is that of Phosphoribosylamine--glycine ligase from Xylella fastidiosa (strain Temecula1 / ATCC 700964).